A 359-amino-acid chain; its full sequence is UPF0496 protein At3g57100 (359 aa).

Residues 179–208 are a coiled coil; it reads HEELAKMVVKLEKTMKDIDKKLRRVRGRRA. Residues 214-234 form a helical membrane-spanning segment; that stretch reads LLAPVIAVIFLSKLVAGLVPI.

Belongs to the UPF0496 family.

It is found in the membrane. This Arabidopsis thaliana (Mouse-ear cress) protein is UPF0496 protein At3g57100.